Reading from the N-terminus, the 265-residue chain is 4-hydroxy-tetrahydrodipicolinate reductase (265 aa).

NAD(+) contacts are provided by residues 7-12 (GASGRM) and Asp33. NADP(+) is bound at residue Arg34. NAD(+) contacts are provided by residues 96 to 98 (GTT) and 120 to 123 (AANM). His153 acts as the Proton donor/acceptor in catalysis. His154 is a binding site for (S)-2,3,4,5-tetrahydrodipicolinate. The active-site Proton donor is the Lys157. Residue 163-164 (GT) coordinates (S)-2,3,4,5-tetrahydrodipicolinate.

It belongs to the DapB family.

The protein localises to the cytoplasm. The catalysed reaction is (S)-2,3,4,5-tetrahydrodipicolinate + NAD(+) + H2O = (2S,4S)-4-hydroxy-2,3,4,5-tetrahydrodipicolinate + NADH + H(+). The enzyme catalyses (S)-2,3,4,5-tetrahydrodipicolinate + NADP(+) + H2O = (2S,4S)-4-hydroxy-2,3,4,5-tetrahydrodipicolinate + NADPH + H(+). It participates in amino-acid biosynthesis; L-lysine biosynthesis via DAP pathway; (S)-tetrahydrodipicolinate from L-aspartate: step 4/4. Catalyzes the conversion of 4-hydroxy-tetrahydrodipicolinate (HTPA) to tetrahydrodipicolinate. The protein is 4-hydroxy-tetrahydrodipicolinate reductase of Burkholderia orbicola (strain AU 1054).